A 66-amino-acid polypeptide reads, in one-letter code: Phylloseptin-H7 (66 aa).

The first 22 residues, 1 to 22 (MAFLKKSLFLVLFLGLVSLSIC), serve as a signal peptide directing secretion. The propeptide occupies 23 to 44 (EEEKRETEEEENDQEEDDKSEE). Residues 25–44 (EKRETEEEENDQEEDDKSEE) form a disordered region. Residues 30–41 (EEEENDQEEDDK) show a composition bias toward acidic residues. A Leucine amide modification is found at L65.

Expressed by the skin glands.

It is found in the secreted. Has antimicrobial activity. In Pithecopus hypochondrialis (Orange-legged leaf frog), this protein is Phylloseptin-H7.